The primary structure comprises 249 residues: Metallo-beta-lactamase type 2 (249 aa).

Residues 1–22 (MLKRLKGLLVLALGFTGLQVFG) form the signal peptide. Zn(2+)-binding residues include H98, H100, D102, H161, and C180. K183 contributes to the substrate binding site. Residue H222 coordinates Zn(2+).

The protein belongs to the metallo-beta-lactamase superfamily. Class-B beta-lactamase family. As to quaternary structure, monomer. Zn(2+) is required as a cofactor.

The protein localises to the periplasm. The enzyme catalyses a beta-lactam + H2O = a substituted beta-amino acid. Its function is as follows. Confers resistance to the different beta-lactams antibiotics (penicillin, cephalosporin and carbapenem) via the hydrolysis of the beta-lactam ring. In Elizabethkingia meningoseptica (Chryseobacterium meningosepticum), this protein is Metallo-beta-lactamase type 2 (blaB5).